A 491-amino-acid chain; its full sequence is Lysosomal Pro-X carboxypeptidase (491 aa).

The N-terminal stretch at 1–17 is a signal peptide; sequence MGCRALLLLSFLLLGAA. The propeptide occupies 18–43; that stretch reads TTIPPRLKTLGSPHLSASPTPDPAVA. N-linked (GlcNAc...) asparagine glycosylation occurs at Asn99. Ser177 serves as the catalytic Charge relay system. The interval 192–332 is SKS domain; it reads HIVVGALAAS…QNIFQALSVY (141 aa). Cystine bridges form between Cys213–Cys370, Cys231–Cys308, Cys262–Cys341, and Cys362–Cys392. Residues Asn315, Asn334, and Asn343 are each glycosylated (N-linked (GlcNAc...) asparagine). Asn413 is a glycosylation site (N-linked (GlcNAc...) asparagine). Residues Asp428 and His453 each act as charge relay system in the active site.

It belongs to the peptidase S28 family. As to quaternary structure, homodimer.

It is found in the lysosome. The catalysed reaction is Cleavage of a -Pro-|-Xaa bond to release a C-terminal amino acid.. Its function is as follows. Cleaves C-terminal amino acids linked to proline in peptides such as angiotensin II, III and des-Arg9-bradykinin. This cleavage occurs at acidic pH, but enzymatic activity is retained with some substrates at neutral pH. The polypeptide is Lysosomal Pro-X carboxypeptidase (Prcp) (Mus musculus (Mouse)).